Reading from the N-terminus, the 463-residue chain is L-seryl-tRNA(Sec) selenium transferase (463 aa).

The residue at position 295 (lysine 295) is an N6-(pyridoxal phosphate)lysine.

This sequence belongs to the SelA family. In terms of assembly, homodecamer; pentamer of dimers. Binds only one seryl-tRNA(Sec) per dimer. The cofactor is pyridoxal 5'-phosphate.

The protein localises to the cytoplasm. It carries out the reaction L-seryl-tRNA(Sec) + selenophosphate + H(+) = L-selenocysteinyl-tRNA(Sec) + phosphate. It participates in aminoacyl-tRNA biosynthesis; selenocysteinyl-tRNA(Sec) biosynthesis; selenocysteinyl-tRNA(Sec) from L-seryl-tRNA(Sec) (bacterial route): step 1/1. Converts seryl-tRNA(Sec) to selenocysteinyl-tRNA(Sec) required for selenoprotein biosynthesis. The polypeptide is L-seryl-tRNA(Sec) selenium transferase (Escherichia fergusonii (strain ATCC 35469 / DSM 13698 / CCUG 18766 / IAM 14443 / JCM 21226 / LMG 7866 / NBRC 102419 / NCTC 12128 / CDC 0568-73)).